We begin with the raw amino-acid sequence, 508 residues long: MVAEAGSMPAASSVKKPFGLRSKMGKWCRHCFPWCRGSGKSNVGTSGDHDDSAMKTLRSKMGKWCRHCFPWCRGSSKSNVGTSGDHDDSAMKTLRSKMGKWCCHCFPCCRGSGKSKVGPWGDYDDSAFMEPRYHVRREDLDKLHRAAWWGKVPRKDLIVMLKDTDMNKKDKQKRTALHLASANGNSEVVKLLLDRRCQLNILDNKKRTALTKAVQCREDECALMLLEHGTDPNIPDEYGNTALHYAIYNEDKLMAKALLLYGADIESKNKHGLTPLLLGVHEQKQQVVKFLIKKKANLNALDRYGRTALILAVCCGSASIVSLLLEQNIDVSSQDLSGQTAREYAVSSHHNVICQLLSDYKEKQMLKVSSENSNPEQDLKLTSEEESQRLKGSENSQPEEMSQEPEINKGGDRKVEEEMKKHGSTHMGFPENLPNGATADNGDDGLIPPRKSRTPESQQFPDTENEQYHSDEQNDTQKQLSEEQNTGILQDEILIHEEKQIEVAENEF.

5 ANK repeats span residues 172–201, 205–234, 238–267, 271–300, and 304–333; these read QKRT…QLNI, KKRT…DPNI, YGNT…DIES, HGLT…NLNA, and YGRT…DVSS. Residues 367 to 376 show a composition bias toward polar residues; it reads KVSSENSNPE. The segment at 367–488 is disordered; it reads KVSSENSNPE…QLSEEQNTGI (122 aa). Basic and acidic residues-rich tracts occupy residues 377 to 392 and 406 to 421; these read QDLK…RLKG and EINK…EMKK. Residues 476-488 show a composition bias toward polar residues; it reads TQKQLSEEQNTGI.

This sequence belongs to the POTE family.

This chain is POTE ankyrin domain family member G (POTEG), found in Homo sapiens (Human).